A 466-amino-acid chain; its full sequence is 23S rRNA (uracil(1939)-C(5))-methyltransferase RlmD (466 aa).

Residues 1–22 are disordered; the sequence is MSSQPNPTSHPEAASAASAASN. The 65-residue stretch at 17-81 folds into the TRAM domain; sequence ASAASNDPVV…PSYEQAHLVE (65 aa). 4 residues coordinate [4Fe-4S] cluster: Cys94, Cys100, Cys103, and Cys182. 6 residues coordinate S-adenosyl-L-methionine: Gln290, Phe319, Asn324, Glu340, Asn368, and Asp389. The active-site Nucleophile is Cys422.

This sequence belongs to the class I-like SAM-binding methyltransferase superfamily. RNA M5U methyltransferase family. RlmD subfamily.

It carries out the reaction uridine(1939) in 23S rRNA + S-adenosyl-L-methionine = 5-methyluridine(1939) in 23S rRNA + S-adenosyl-L-homocysteine + H(+). Functionally, catalyzes the formation of 5-methyl-uridine at position 1939 (m5U1939) in 23S rRNA. The polypeptide is 23S rRNA (uracil(1939)-C(5))-methyltransferase RlmD (Cupriavidus metallidurans (strain ATCC 43123 / DSM 2839 / NBRC 102507 / CH34) (Ralstonia metallidurans)).